Reading from the N-terminus, the 159-residue chain is Protein-export protein SecB (159 aa).

This sequence belongs to the SecB family. Homotetramer, a dimer of dimers. One homotetramer interacts with 1 SecA dimer.

Its subcellular location is the cytoplasm. Its function is as follows. One of the proteins required for the normal export of preproteins out of the cell cytoplasm. It is a molecular chaperone that binds to a subset of precursor proteins, maintaining them in a translocation-competent state. It also specifically binds to its receptor SecA. In Nitrosospira multiformis (strain ATCC 25196 / NCIMB 11849 / C 71), this protein is Protein-export protein SecB.